Here is a 259-residue protein sequence, read N- to C-terminus: GTP cyclohydrolase FolE2 (259 aa).

Belongs to the GTP cyclohydrolase IV family.

It carries out the reaction GTP + H2O = 7,8-dihydroneopterin 3'-triphosphate + formate + H(+). It functions in the pathway cofactor biosynthesis; 7,8-dihydroneopterin triphosphate biosynthesis; 7,8-dihydroneopterin triphosphate from GTP: step 1/1. Functionally, converts GTP to 7,8-dihydroneopterin triphosphate. The polypeptide is GTP cyclohydrolase FolE2 (Nitratidesulfovibrio vulgaris (strain DSM 19637 / Miyazaki F) (Desulfovibrio vulgaris)).